Consider the following 128-residue polypeptide: Transcription antitermination protein NusB (128 aa).

Belongs to the NusB family.

In terms of biological role, involved in transcription antitermination. Required for transcription of ribosomal RNA (rRNA) genes. Binds specifically to the boxA antiterminator sequence of the ribosomal RNA (rrn) operons. The polypeptide is Transcription antitermination protein NusB (Listeria welshimeri serovar 6b (strain ATCC 35897 / DSM 20650 / CCUG 15529 / CIP 8149 / NCTC 11857 / SLCC 5334 / V8)).